Reading from the N-terminus, the 210-residue chain is Histidine biosynthesis bifunctional protein HisIE (210 aa).

Positions 1–106 (MTNYKIDFSK…SCFNTEVPFS (106 aa)) are phosphoribosyl-AMP cyclohydrolase. Residues 107 to 210 (VQTLAQTVQD…KGERQNIEQW (104 aa)) are phosphoribosyl-ATP pyrophosphohydrolase.

In the N-terminal section; belongs to the PRA-CH family. The protein in the C-terminal section; belongs to the PRA-PH family.

It is found in the cytoplasm. It carries out the reaction 1-(5-phospho-beta-D-ribosyl)-ATP + H2O = 1-(5-phospho-beta-D-ribosyl)-5'-AMP + diphosphate + H(+). It catalyses the reaction 1-(5-phospho-beta-D-ribosyl)-5'-AMP + H2O = 1-(5-phospho-beta-D-ribosyl)-5-[(5-phospho-beta-D-ribosylamino)methylideneamino]imidazole-4-carboxamide. It functions in the pathway amino-acid biosynthesis; L-histidine biosynthesis; L-histidine from 5-phospho-alpha-D-ribose 1-diphosphate: step 2/9. It participates in amino-acid biosynthesis; L-histidine biosynthesis; L-histidine from 5-phospho-alpha-D-ribose 1-diphosphate: step 3/9. This is Histidine biosynthesis bifunctional protein HisIE (hisI) from Staphylococcus aureus (strain COL).